We begin with the raw amino-acid sequence, 250 residues long: ATP synthase subunit a (250 aa).

The next 6 helical transmembrane spans lie at Ala29 to Ser49, Phe84 to Phe104, Ile114 to Tyr134, Val143 to Ile163, Phe193 to Ile213, and Val216 to Leu236.

Belongs to the ATPase A chain family. As to quaternary structure, F-type ATPases have 2 components, CF(1) - the catalytic core - and CF(0) - the membrane proton channel. CF(1) has five subunits: alpha(3), beta(3), gamma(1), delta(1), epsilon(1). CF(0) has three main subunits: a(1), b(2) and c(9-12). The alpha and beta chains form an alternating ring which encloses part of the gamma chain. CF(1) is attached to CF(0) by a central stalk formed by the gamma and epsilon chains, while a peripheral stalk is formed by the delta and b chains.

It is found in the cell inner membrane. Key component of the proton channel; it plays a direct role in the translocation of protons across the membrane. This chain is ATP synthase subunit a, found in Rhizobium etli (strain CIAT 652).